The chain runs to 588 residues: Ankyrin repeat protein OPG003 (588 aa).

ANK repeat units follow at residues 69–101, 175–223, 227–259, 300–336, and 339–368; these read CGNS…NFDS, DGLT…NINA, IGNT…DTRI, EGQH…QKDE, and NTMT…DINL. The segment at 557-574 is PRANC/F-box-like; the sequence is LPPEIMRNIITKLSDYHL.

This sequence belongs to the orthopoxvirus OPG003 family.

Functionally, may be involved in virus-host protein interaction through the ankyrin repeats and PRANC regions. The sequence is that of Ankyrin repeat protein OPG003 (OPG003) from Cynomys gunnisoni (Gunnison's prairie dog).